The chain runs to 146 residues: D-aminoacyl-tRNA deacylase (146 aa).

The Gly-cisPro motif, important for rejection of L-amino acids motif lies at 137–138 (GP).

This sequence belongs to the DTD family. In terms of assembly, homodimer.

It is found in the cytoplasm. It carries out the reaction glycyl-tRNA(Ala) + H2O = tRNA(Ala) + glycine + H(+). The enzyme catalyses a D-aminoacyl-tRNA + H2O = a tRNA + a D-alpha-amino acid + H(+). In terms of biological role, an aminoacyl-tRNA editing enzyme that deacylates mischarged D-aminoacyl-tRNAs. Also deacylates mischarged glycyl-tRNA(Ala), protecting cells against glycine mischarging by AlaRS. Acts via tRNA-based rather than protein-based catalysis; rejects L-amino acids rather than detecting D-amino acids in the active site. By recycling D-aminoacyl-tRNA to D-amino acids and free tRNA molecules, this enzyme counteracts the toxicity associated with the formation of D-aminoacyl-tRNA entities in vivo and helps enforce protein L-homochirality. The chain is D-aminoacyl-tRNA deacylase from Bacillus thuringiensis (strain Al Hakam).